The chain runs to 547 residues: Inositol-tetrakisphosphate 1-kinase 6 (547 aa).

1D-myo-inositol 1,3,4-trisphosphate is bound at residue lysine 263. 2 residues coordinate ATP: arginine 317 and lysine 370. The ATP-grasp domain occupies leucine 327–glutamate 539. 1D-myo-inositol 1,3,4-trisphosphate-binding residues include histidine 381 and lysine 415. ATP-binding positions include glutamine 404–lysine 415, serine 430, and serine 450. Mg(2+) contacts are provided by aspartate 497, aspartate 511, and asparagine 513. 1D-myo-inositol 1,3,4-trisphosphate-binding residues include asparagine 513 and serine 517.

It belongs to the ITPK1 family. Monomer. Requires Mg(2+) as cofactor. Highly expressed in embryos and at lower levels in roots, leaves, flowers and anthers.

The catalysed reaction is 1D-myo-inositol 3,4,5,6-tetrakisphosphate + ATP = 1D-myo-inositol 1,3,4,5,6-pentakisphosphate + ADP + H(+). It carries out the reaction 1D-myo-inositol 1,3,4-trisphosphate + ATP = 1D-myo-inositol 1,3,4,5-tetrakisphosphate + ADP + H(+). The enzyme catalyses 1D-myo-inositol 1,3,4-trisphosphate + ATP = 1D-myo-inositol 1,3,4,6-tetrakisphosphate + ADP + H(+). Kinase that can phosphorylate various inositol polyphosphate such as Ins(3,4,5,6)P4 or Ins(1,3,4)P3 and participates in phytic acid biosynthesis in developing seeds. Phytic acid is the primary storage form of phosphorus in cereal grains and other plant seeds. This Oryza sativa subsp. japonica (Rice) protein is Inositol-tetrakisphosphate 1-kinase 6 (ITPK6).